Reading from the N-terminus, the 417-residue chain is DNA-directed RNA polymerase subunit beta (417 aa).

It belongs to the RNA polymerase beta chain family. In plastids the minimal PEP RNA polymerase catalytic core is composed of four subunits: alpha, beta, beta', and beta''. When a (nuclear-encoded) sigma factor is associated with the core the holoenzyme is formed, which can initiate transcription.

The protein resides in the plastid. The protein localises to the chloroplast. The catalysed reaction is RNA(n) + a ribonucleoside 5'-triphosphate = RNA(n+1) + diphosphate. DNA-dependent RNA polymerase catalyzes the transcription of DNA into RNA using the four ribonucleoside triphosphates as substrates. The protein is DNA-directed RNA polymerase subunit beta (rpoB) of Saponaria officinalis (Common soapwort).